The primary structure comprises 314 residues: N-myc-interactor (314 aa).

Residues 1-24 (MDADKDNIKQACDERSAEMDDMRG) are disordered. Phosphoserine is present on serine 16. The stretch at 31 to 65 (VHEIMSENKELDEEIKKLEAELQSDAREFQIKENV) forms a coiled coil. NID domains follow at residues 104-193 (GQAL…GEVE) and 202-293 (RSAV…EVEV).

This sequence belongs to the NMI family. In terms of assembly, interacts with MYCN and MYC, as well as with other transcription factors with a Zip, HLH or a HLH-Zip motif. Interacts with all STAT proteins except STAT2. Interacts with IRF7, the interaction is direct and leads to the inhibition of IRF7-mediated type I IFN production. Interacts (via coiled-coil domain) with TRIM21 (via the SPRY domain); the interaction leads to 'Lys-63'-linked ubiquitination of NMI. Interacts with IFI35; the interaction is direct and is facilitated by TRIM21. Interacts with TLR4; the interaction is direct and leads to NF-kappa-B activation. May be ubiquitinated. As to expression, expressed in macrophages.

The protein resides in the cytoplasm. It is found in the nucleus. Its subcellular location is the secreted. Functionally, acts as a signaling pathway regulator involved in innate immune system response. In response to interleukin 2/IL2 and interferon IFN-gamma/IFNG, interacts with signal transducer and activator of transcription/STAT which activate the transcription of downstream genes involved in a multitude of signals for development and homeostasis. Enhances the recruitment of CBP/p300 coactivators to STAT1 and STAT5, resulting in increased STAT1- and STAT5-dependent transcription. In response to interferon IFN-alpha, associates in a complex with transcriptional regulator IFI35 to regulate immune response; the complex formation prevents proteasome-mediated degradation of IFI35. In complex with IFI35, negatively regulates nuclear factor NF-kappa-B signaling by inhibiting the nuclear translocation, activation and transcription of NF-kappa-B subunit p65/RELA, resulting in the inhibition of endothelial cell proliferation, migration and re-endothelialization of injured arteries. Negatively regulates virus-triggered type I interferon/IFN production by inducing proteosome-dependent degradation of IRF7, a transcriptional regulator of type I IFN, thereby interfering with cellular antiviral responses. Beside its role as an intracellular signaling pathway regulator, also functions extracellularly as damage-associated molecular patterns (DAMPs) to promote inflammation, when actively released by macrophage to the extracellular space during cell injury or pathogen invasion. Macrophage-secreted NMI activates NF-kappa-B signaling in adjacent macrophages through Toll-like receptor 4/TLR4 binding and activation, thereby inducing NF-kappa-B translocation from the cytoplasm into the nucleus which promotes the release of pro-inflammatory cytokines. The polypeptide is N-myc-interactor (Mus musculus (Mouse)).